The sequence spans 433 residues: Enolase (433 aa).

Glutamine 167 provides a ligand contact to (2R)-2-phosphoglycerate. Glutamate 209 (proton donor) is an active-site residue. Mg(2+)-binding residues include aspartate 246, glutamate 291, and aspartate 318. Residues lysine 343, arginine 372, serine 373, and lysine 394 each contribute to the (2R)-2-phosphoglycerate site. The active-site Proton acceptor is lysine 343.

It belongs to the enolase family. In terms of assembly, component of the RNA degradosome, a multiprotein complex involved in RNA processing and mRNA degradation. Mg(2+) serves as cofactor.

The protein localises to the cytoplasm. It localises to the secreted. The protein resides in the cell surface. It carries out the reaction (2R)-2-phosphoglycerate = phosphoenolpyruvate + H2O. It functions in the pathway carbohydrate degradation; glycolysis; pyruvate from D-glyceraldehyde 3-phosphate: step 4/5. In terms of biological role, catalyzes the reversible conversion of 2-phosphoglycerate (2-PG) into phosphoenolpyruvate (PEP). It is essential for the degradation of carbohydrates via glycolysis. This Pasteurella multocida (strain Pm70) protein is Enolase.